The sequence spans 730 residues: 1,4-alpha-glucan branching enzyme GlgB (730 aa).

Residue Asp-405 is the Nucleophile of the active site. The Proton donor role is filled by Glu-458.

Belongs to the glycosyl hydrolase 13 family. GlgB subfamily. As to quaternary structure, monomer.

It catalyses the reaction Transfers a segment of a (1-&gt;4)-alpha-D-glucan chain to a primary hydroxy group in a similar glucan chain.. Its pathway is glycan biosynthesis; glycogen biosynthesis. In terms of biological role, catalyzes the formation of the alpha-1,6-glucosidic linkages in glycogen by scission of a 1,4-alpha-linked oligosaccharide from growing alpha-1,4-glucan chains and the subsequent attachment of the oligosaccharide to the alpha-1,6 position. In Haemophilus influenzae (strain ATCC 51907 / DSM 11121 / KW20 / Rd), this protein is 1,4-alpha-glucan branching enzyme GlgB (glgB).